The following is an 88-amino-acid chain: UPF0297 protein GK2555 (88 aa).

The protein belongs to the UPF0297 family.

The chain is UPF0297 protein GK2555 from Geobacillus kaustophilus (strain HTA426).